Reading from the N-terminus, the 648-residue chain is Threonine--tRNA ligase (648 aa).

Residues 1 to 61 (MIDIILPDGS…INTATVKAIT (61 aa)) enclose the TGS domain. Residues 243–549 (DHRKLGRELE…LIEHYSGKLP (307 aa)) form a catalytic region. Positions 349, 400, and 526 each coordinate Zn(2+).

This sequence belongs to the class-II aminoacyl-tRNA synthetase family. As to quaternary structure, homodimer. Requires Zn(2+) as cofactor.

It localises to the cytoplasm. It catalyses the reaction tRNA(Thr) + L-threonine + ATP = L-threonyl-tRNA(Thr) + AMP + diphosphate + H(+). Catalyzes the attachment of threonine to tRNA(Thr) in a two-step reaction: L-threonine is first activated by ATP to form Thr-AMP and then transferred to the acceptor end of tRNA(Thr). Also edits incorrectly charged L-seryl-tRNA(Thr). This chain is Threonine--tRNA ligase, found in Orientia tsutsugamushi (strain Ikeda) (Rickettsia tsutsugamushi).